The primary structure comprises 700 residues: Dipeptidyl aminopeptidase 1 (700 aa).

The signal sequence occupies residues 1–27 (MAKRIFSVSFLLVLLNVLHICIKFSVA). N-linked (GlcNAc...) asparagine glycosylation is found at N52, N144, N265, N337, and N373. Positions 210-369 (DNVNEIKHLD…SPKRELEINE (160 aa)) are excised as a propeptide. Disulfide bonds link C395/C446 and C439/C478. The active site involves C398. The residue at position 416 (T416) is a Sulfothreonine. Chloride-binding residues include F450 and Y452. N-linked (GlcNAc...) asparagine glycosylation is found at N481, N490, and N507. Y549 is a chloride binding site. Residue N615 is glycosylated (N-linked (GlcNAc...) asparagine). Catalysis depends on residues H624 and N648. Residue N667 is glycosylated (N-linked (GlcNAc...) asparagine).

Belongs to the peptidase C1 family. In terms of assembly, monomer. Chloride serves as cofactor.

Its subcellular location is the vacuole lumen. It is found in the parasitophorous vacuole lumen. The enzyme catalyses Release of an N-terminal dipeptide, Xaa-Yaa-|-Zaa-, except when Xaa is Arg or Lys, or Yaa or Zaa is Pro.. Its function is as follows. Thiol protease that cleaves dipeptides from the N-terminus of protein substrates. Active against a broad range of dipeptide substrates composed of both polar and hydrophobic amino acids. Proline cannot occupy the P1 position and arginine or lysine cannot occupy the P2 position of the substrate. Involved in host hemoglobin degradation by generating dipeptides from hemoglobin-derived oligopeptides. This chain is Dipeptidyl aminopeptidase 1, found in Plasmodium falciparum (isolate 3D7).